We begin with the raw amino-acid sequence, 760 residues long: Molybdenum cofactor sulfurase 2 (760 aa).

At Lys-223 the chain carries N6-(pyridoxal phosphate)lysine. The active site involves Cys-389. Residues 608–758 (QSDDEARTLR…LHCGSPLQVV (151 aa)) form the MOSC domain.

The protein belongs to the class-V pyridoxal-phosphate-dependent aminotransferase family. MOCOS subfamily. Pyridoxal 5'-phosphate is required as a cofactor.

It carries out the reaction Mo-molybdopterin + L-cysteine + AH2 = thio-Mo-molybdopterin + L-alanine + A + H2O. In terms of biological role, sulfurates the molybdenum cofactor. Sulfation of molybdenum is essential for xanthine dehydrogenase (XDH) and aldehyde oxidase (ADO) enzymes in which molybdenum cofactor is liganded by 1 oxygen and 1 sulfur atom in active form. This chain is Molybdenum cofactor sulfurase 2, found in Culex quinquefasciatus (Southern house mosquito).